The chain runs to 213 residues: Dimethyl sulfoxide reductase transcriptional activator (213 aa).

In terms of domain architecture, HTH bat-type spans 155-206 (LTAKQREAALIAVHHGYYETPRRTELATLAEALGISKSALSQRLNAVEAKLA).

In terms of biological role, involved in activating dmsEABCD gene expression related to dimethyl sulfoxide (DMSO) reductase. Required for anaerobic respiration on dimethyl sulfoxide (DMSO). This Haloferax volcanii (strain ATCC 29605 / DSM 3757 / JCM 8879 / NBRC 14742 / NCIMB 2012 / VKM B-1768 / DS2) (Halobacterium volcanii) protein is Dimethyl sulfoxide reductase transcriptional activator.